A 447-amino-acid chain; its full sequence is ATP-dependent protease ATPase subunit HslU (447 aa).

ATP is bound by residues Ile17, 59 to 64, Asp256, Glu321, and Arg393; that span reads GVGKTE.

The protein belongs to the ClpX chaperone family. HslU subfamily. In terms of assembly, a double ring-shaped homohexamer of HslV is capped on each side by a ring-shaped HslU homohexamer. The assembly of the HslU/HslV complex is dependent on binding of ATP.

The protein localises to the cytoplasm. In terms of biological role, ATPase subunit of a proteasome-like degradation complex; this subunit has chaperone activity. The binding of ATP and its subsequent hydrolysis by HslU are essential for unfolding of protein substrates subsequently hydrolyzed by HslV. HslU recognizes the N-terminal part of its protein substrates and unfolds these before they are guided to HslV for hydrolysis. The chain is ATP-dependent protease ATPase subunit HslU from Pseudomonas putida (strain GB-1).